A 430-amino-acid chain; its full sequence is Tol-Pal system protein TolB (430 aa).

A signal peptide spans 1–21 (MKQALRVAFGFLILWASVLHA).

This sequence belongs to the TolB family. As to quaternary structure, the Tol-Pal system is composed of five core proteins: the inner membrane proteins TolA, TolQ and TolR, the periplasmic protein TolB and the outer membrane protein Pal. They form a network linking the inner and outer membranes and the peptidoglycan layer.

The protein localises to the periplasm. In terms of biological role, part of the Tol-Pal system, which plays a role in outer membrane invagination during cell division and is important for maintaining outer membrane integrity. TolB occupies a key intermediary position in the Tol-Pal system because it communicates directly with both membrane-embedded components, Pal in the outer membrane and TolA in the inner membrane. This is Tol-Pal system protein TolB from Escherichia coli O8 (strain IAI1).